The following is a 291-amino-acid chain: Light-independent protochlorophyllide reductase iron-sulfur ATP-binding protein (291 aa).

Residues 10–15 (GIGKST) and lysine 39 each bind ATP. Serine 14 contacts Mg(2+). [4Fe-4S] cluster contacts are provided by cysteine 95 and cysteine 129. 180-181 (NR) provides a ligand contact to ATP.

This sequence belongs to the NifH/BchL/ChlL family. In terms of assembly, homodimer. Protochlorophyllide reductase is composed of three subunits; ChlL, ChlN and ChlB. [4Fe-4S] cluster serves as cofactor.

The protein resides in the plastid. It localises to the chloroplast. The enzyme catalyses chlorophyllide a + oxidized 2[4Fe-4S]-[ferredoxin] + 2 ADP + 2 phosphate = protochlorophyllide a + reduced 2[4Fe-4S]-[ferredoxin] + 2 ATP + 2 H2O. The protein operates within porphyrin-containing compound metabolism; chlorophyll biosynthesis (light-independent). Functionally, component of the dark-operative protochlorophyllide reductase (DPOR) that uses Mg-ATP and reduced ferredoxin to reduce ring D of protochlorophyllide (Pchlide) to form chlorophyllide a (Chlide). This reaction is light-independent. The L component serves as a unique electron donor to the NB-component of the complex, and binds Mg-ATP. The protein is Light-independent protochlorophyllide reductase iron-sulfur ATP-binding protein of Pinus koraiensis (Korean pine).